The chain runs to 315 residues: 4-carboxy-2-hydroxymuconate-6-semialdehyde dehydrogenase (315 aa).

This sequence belongs to the Gfo/Idh/MocA family. In terms of assembly, homodimer.

It carries out the reaction 4-carboxy-2-hydroxymuconate semialdehyde hemiacetal + NADP(+) = 2-oxo-2H-pyran-4,6-dicarboxylate + NADPH + H(+). Its pathway is secondary metabolite metabolism; lignin degradation. Inhibited by p-chloromercuribenzoate (10 mM), HgCl2 (10 mM), or 5,5-dithiobis(2-nitrobenzoate) (100 mM). Involved in the degradation of protocatechuate (PCA) via the PCA 4,5-cleavage pathway. Catalyzes the oxidation of the hemiacetal form of 4-carboxy-2-hydroxymuconate-6-semialdehyde (CHMS) to produce 2-pyrone-4,6-dicarboxylate (PDC). LigC has 10-times-higher affinity to NADP than to NAD. This Sphingobium sp. (strain NBRC 103272 / SYK-6) protein is 4-carboxy-2-hydroxymuconate-6-semialdehyde dehydrogenase (ligC).